The following is an 82-amino-acid chain: RNA-binding protein Hfq (82 aa).

In terms of domain architecture, Sm spans 11–71 (DTFLNSVRKS…ISTIMPAQPV (61 aa)).

Belongs to the Hfq family. Homohexamer.

RNA chaperone that binds small regulatory RNA (sRNAs) and mRNAs to facilitate mRNA translational regulation in response to envelope stress, environmental stress and changes in metabolite concentrations. Also binds with high specificity to tRNAs. The chain is RNA-binding protein Hfq from Caulobacter sp. (strain K31).